The following is an 887-amino-acid chain: Cadherin-1 (887 aa).

Positions 1 to 26 (MGRRWGSPALQRFPVLVLLLLLQVCG) are cleaved as a signal peptide. The propeptide occupies 27 to 160 (RRCDEAAPCQ…DPGFLRRQKR (134 aa)). Cadherin domains lie at 161 to 268 (DWVI…KPVF), 269 to 381 (IKEV…IPIF), 382 to 493 (NPTM…PPVF), 494 to 599 (VPPI…DNGP), and 600 to 704 (TPEP…RRSY). The Extracellular segment spans residues 161 to 714 (DWVIPPISCL…IVGGLGVPAI (554 aa)). Aspartate 263 is a Ca(2+) binding site. A glycan (N-linked (GlcNAc...) asparagine) is linked at asparagine 291. Aspartate 294 provides a ligand contact to Ca(2+). N-linked (GlcNAc...) asparagine glycosylation occurs at asparagine 346. N-linked (GlcNAc...) asparagine glycans are attached at residues asparagine 564 and asparagine 643. Residues 715–735 (LGILGGILALLILLLLLLLFA) form a helical membrane-spanning segment. Residues 736 to 887 (RRRKVEKEPL…ELYGGGEDDE (152 aa)) lie on the Cytoplasmic side of the membrane. The interval 745-770 (LLPPEDDMRDNVYNYDEEGGGEEDQD) is disordered. Residues 759-770 (YDEEGGGEEDQD) show a composition bias toward acidic residues.

In terms of assembly, homodimer. Interacts with CTNNA2. As to expression, expressed in the liver.

It is found in the cell junction. Its subcellular location is the adherens junction. The protein localises to the cell membrane. It localises to the endosome. The protein resides in the golgi apparatus. It is found in the trans-Golgi network. Its subcellular location is the cytoplasm. The protein localises to the desmosome. Its function is as follows. Cadherins are calcium-dependent cell adhesion proteins. They preferentially interact with themselves in a homophilic manner in connecting cells; cadherins may thus contribute to the sorting of heterogeneous cell types. Promotes organization of radial actin fiber structure and cellular response to contractile forces, via anchoring of radial actin fibers to CDH1 junction complexes at the cell membrane. E-cadherin is a ligand for integrin alpha-E/beta-7. The sequence is that of Cadherin-1 (CDH1) from Gallus gallus (Chicken).